The chain runs to 542 residues: Cytochrome P450 27C1 (542 aa).

The N-terminal 80 residues, Met-1–Leu-80, are a transit peptide targeting the mitochondrion. The disordered stretch occupies residues Ala-20–Pro-75. Over residues Pro-32–Ala-46 the composition is skewed to low complexity. Heme is bound at residue Cys-488.

Belongs to the cytochrome P450 family. Requires heme as cofactor. As to expression, widely expressed, with highest levels in the liver, kidney and pancreas. In terms of tissue distribution, expressed in the skin (at protein level).

Its subcellular location is the mitochondrion membrane. It carries out the reaction all-trans-retinol + 2 reduced [adrenodoxin] + O2 + 2 H(+) = all-trans-3,4-didehydroretinol + 2 oxidized [adrenodoxin] + 2 H2O. It catalyses the reaction all-trans-retinol + 2 reduced [adrenodoxin] + O2 + 2 H(+) = all-trans-4-hydroxyretinol + 2 oxidized [adrenodoxin] + H2O. The enzyme catalyses all-trans-retinol + 2 reduced [adrenodoxin] + O2 + 2 H(+) = all-trans-3-hydroxyretinol + 2 oxidized [adrenodoxin] + H2O. Its pathway is cofactor metabolism; retinol metabolism. Its function is as follows. A cytochrome P450 monooxygenase that catalyzes the 3,4 desaturation of all-trans-retinol (also called vitamin A1) to all-trans-3,4-didehydroretinol (also called vitamin A2) in the skin. Desaturates with lower efficiency all-trans retinal and all-trans retinoic acid. Forms minor amounts of 3-hydroxy and 4-hydroxy all-trans-retinol derivatives. Mechanistically, uses molecular oxygen inserting one oxygen atom into a substrate and reducing the second into a water molecule. Two electrons are provided by NADPH via a two-protein mitochondrial transfer system comprising flavoprotein FDXR (adrenodoxin/ferredoxin reductase) and nonheme iron-sulfur protein FDX1 or FDX2 (adrenodoxin/ferredoxin). The sequence is that of Cytochrome P450 27C1 from Homo sapiens (Human).